Reading from the N-terminus, the 319-residue chain is ATP-dependent 6-phosphofructokinase (319 aa).

Glycine 11 serves as a coordination point for ATP. 21-25 is an ADP binding site; sequence RAVVR. Residues 72–73 and 102–105 contribute to the ATP site; these read RC and GDGS. Aspartate 103 lines the Mg(2+) pocket. Substrate is bound at residue 125–127; sequence TID. Catalysis depends on aspartate 127, which acts as the Proton acceptor. Arginine 154 is a binding site for ADP. Residues arginine 162 and 169–171 contribute to the substrate site; that span reads MGR. Residues 185–187, arginine 211, and 213–215 contribute to the ADP site; these read GAE and KKH. Substrate is bound by residues glutamate 222, arginine 243, and 249-252; that span reads HIQR.

Belongs to the phosphofructokinase type A (PFKA) family. ATP-dependent PFK group I subfamily. Prokaryotic clade 'B1' sub-subfamily. As to quaternary structure, homotetramer. Mg(2+) is required as a cofactor.

Its subcellular location is the cytoplasm. The catalysed reaction is beta-D-fructose 6-phosphate + ATP = beta-D-fructose 1,6-bisphosphate + ADP + H(+). It functions in the pathway carbohydrate degradation; glycolysis; D-glyceraldehyde 3-phosphate and glycerone phosphate from D-glucose: step 3/4. Its activity is regulated as follows. Allosterically activated by ADP and other diphosphonucleosides, and allosterically inhibited by phosphoenolpyruvate. Functionally, catalyzes the phosphorylation of D-fructose 6-phosphate to fructose 1,6-bisphosphate by ATP, the first committing step of glycolysis. This chain is ATP-dependent 6-phosphofructokinase, found in Bacillus pumilus (strain SAFR-032).